The primary structure comprises 162 residues: Class I hydrophobin dewC (162 aa).

Positions 1 to 21 (MQFTIASLIATAVLGLQMASA) are cleaved as a signal peptide. Cystine bridges form between C43–C119, C50–C113, C51–C90, and C120–C156.

The protein belongs to the fungal hydrophobin family. In terms of assembly, self-assembles to form functional amyloid fibrils called rodlets. Self-assembly into fibrillar rodlets occurs spontaneously at hydrophobic:hydrophilic interfaces and the rodlets further associate laterally to form amphipathic monolayers.

The protein resides in the secreted. It is found in the spore wall. Its function is as follows. Aerial growth, conidiation, and dispersal of filamentous fungi in the environment rely upon a capability of their secreting small amphipathic proteins called hydrophobins (HPBs) with low sequence identity. Class I can self-assemble into an outermost layer of rodlet bundles on aerial cell surfaces, conferring cellular hydrophobicity that supports fungal growth, development and dispersal; whereas Class II form highly ordered films at water-air interfaces through intermolecular interactions but contribute nothing to the rodlet structure. DewC is a class I hydrophobin that contributes to the hydrophobicity of the spore surface. This chain is Class I hydrophobin dewC, found in Emericella nidulans (strain FGSC A4 / ATCC 38163 / CBS 112.46 / NRRL 194 / M139) (Aspergillus nidulans).